The following is a 67-amino-acid chain: Conotoxin Cl6.6a (67 aa).

A signal peptide spans 1–24 (MKLTCVLIAAVLLLAVCQLDSADA). Residues 25-37 (TGYMRKNPSLRSP) constitute a propeptide that is removed on maturation. Cystine bridges form between Cys-43–Cys-57, Cys-50–Cys-61, and Cys-56–Cys-65.

Belongs to the conotoxin O1 superfamily. Expressed by the venom duct.

It localises to the secreted. This is Conotoxin Cl6.6a from Californiconus californicus (California cone).